A 241-amino-acid chain; its full sequence is U2 small nuclear ribonucleoprotein B'' (241 aa).

The RRM 1 domain maps to 12–91 (QTLYVNNLYE…RPMKIQYCKS (80 aa)). Positions 99-126 (LDGTYMEKKREREENDKKGSNKKQDRKS) are enriched in basic and acidic residues. The tract at residues 99–169 (LDGTYMEKKR…PRDDPPNKTL (71 aa)) is disordered. Residues 129-152 (QQQQQQKRPGAPTSTTSTTSPTTS) are compositionally biased toward low complexity. Residues 167 to 241 (KTLFVENLPD…KPMVVSFAAQ (75 aa)) form the RRM 2 domain.

This sequence belongs to the RRM U1 A/B'' family. In terms of assembly, identified in the spliceosome B complex. Identified in the spliceosome C complex.

The protein resides in the nucleus. In terms of biological role, involved in pre-mRNA splicing as component of the spliceosome. Associated with sn-RNP U2, where it contributes to the binding of stem loop IV of U2 snRNA. This is U2 small nuclear ribonucleoprotein B'' (snrpb2) from Dictyostelium discoideum (Social amoeba).